Consider the following 317-residue polypeptide: Transcription initiation factor IIB 3 (317 aa).

The span at 1 to 14 (MERATREREKEQRE) shows a compositional bias: basic and acidic residues. The segment at 1-25 (MERATREREKEQREQAQTNDEAQQC) is disordered. The segment at 21–50 (EAQQCPECNSANVITDQSERVCEDCGLVLE) adopts a TFIIB-type zinc-finger fold. Residues cysteine 25, cysteine 28, cysteine 42, and cysteine 45 each coordinate Zn(2+). The tract at residues 62-83 (AFNSSERDQKSRVGAPTTKTMH) is disordered. Tandem repeats lie at residues 136–219 (SEID…AQEL) and 230–311 (EYLP…EQIE).

It belongs to the TFIIB family.

Stabilizes TBP binding to an archaeal box-A promoter. Also responsible for recruiting RNA polymerase II to the pre-initiation complex (DNA-TBP-TFIIB). This Halobacterium salinarum (strain ATCC 700922 / JCM 11081 / NRC-1) (Halobacterium halobium) protein is Transcription initiation factor IIB 3.